The primary structure comprises 162 residues: 2-C-methyl-D-erythritol 2,4-cyclodiphosphate synthase (162 aa).

Residues D10 and H12 each contribute to the a divalent metal cation site. 4-CDP-2-C-methyl-D-erythritol 2-phosphate is bound by residues 10 to 12 (DVH) and 36 to 37 (HS). H44 serves as a coordination point for a divalent metal cation. 4-CDP-2-C-methyl-D-erythritol 2-phosphate is bound by residues 58 to 60 (DIG), 63 to 67 (FPDTD), 102 to 108 (AQAPKMA), 134 to 137 (TTTE), F141, and R144.

The protein belongs to the IspF family. As to quaternary structure, homotrimer. A divalent metal cation serves as cofactor.

It carries out the reaction 4-CDP-2-C-methyl-D-erythritol 2-phosphate = 2-C-methyl-D-erythritol 2,4-cyclic diphosphate + CMP. The protein operates within isoprenoid biosynthesis; isopentenyl diphosphate biosynthesis via DXP pathway; isopentenyl diphosphate from 1-deoxy-D-xylulose 5-phosphate: step 4/6. Its function is as follows. Involved in the biosynthesis of isopentenyl diphosphate (IPP) and dimethylallyl diphosphate (DMAPP), two major building blocks of isoprenoid compounds. Catalyzes the conversion of 4-diphosphocytidyl-2-C-methyl-D-erythritol 2-phosphate (CDP-ME2P) to 2-C-methyl-D-erythritol 2,4-cyclodiphosphate (ME-CPP) with a corresponding release of cytidine 5-monophosphate (CMP). This Pseudoalteromonas atlantica (strain T6c / ATCC BAA-1087) protein is 2-C-methyl-D-erythritol 2,4-cyclodiphosphate synthase.